The primary structure comprises 534 residues: Cytochrome c oxidase subunit 1 (534 aa).

A helical transmembrane segment spans residues 16–36 (VLYFMLAIFSGMAGTAMSLII). Ca(2+)-binding residues include glutamate 39, alanine 42, and glycine 44. 6 helical membrane passes run 57-77 (VLVV…ALIG), 101-121 (IAFW…LVES), 147-167 (AIFA…NFIV), 182-202 (LPLF…SLPV), 235-255 (LFYF…FGII), and 267-287 (VFGE…GFLV). Histidine 62 provides a ligand contact to Fe(II)-heme a. Histidine 241 contacts Cu cation. A cross-link (1'-histidyl-3'-tyrosine (His-Tyr)) is located at residues 241–245 (HPEVY). Tyrosine 245 is a binding site for O2. Residues histidine 290 and histidine 291 each coordinate Cu cation. 2 helical membrane-spanning segments follow: residues 310 to 330 (MIIA…IYGG) and 338 to 358 (MLYA…GVAL). Residues histidine 368 and aspartate 369 each contribute to the Mg(2+) site. A run of 2 helical transmembrane segments spans residues 372–392 (YVVG…LFAG) and 414–434 (FWLI…LGIN). Position 376 (histidine 376) interacts with heme a3. Fe(II)-heme a is bound at residue histidine 378. Ca(2+) is bound at residue proline 441. The helical transmembrane segment at 452–472 (YVASIGSFIATLSLFLFIYIL) threads the bilayer.

It belongs to the heme-copper respiratory oxidase family. As to quaternary structure, component of the cytochrome c oxidase (complex IV, CIV), a multisubunit enzyme composed of a catalytic core of 3 subunits and several supernumerary subunits. The complex exists as a monomer or a dimer and forms supercomplexes (SCs) in the inner mitochondrial membrane with ubiquinol-cytochrome c oxidoreductase (cytochrome b-c1 complex, complex III, CIII). Heme is required as a cofactor. Cu cation serves as cofactor.

The protein localises to the mitochondrion inner membrane. The enzyme catalyses 4 Fe(II)-[cytochrome c] + O2 + 8 H(+)(in) = 4 Fe(III)-[cytochrome c] + 2 H2O + 4 H(+)(out). Its pathway is energy metabolism; oxidative phosphorylation. In terms of biological role, component of the cytochrome c oxidase, the last enzyme in the mitochondrial electron transport chain which drives oxidative phosphorylation. The respiratory chain contains 3 multisubunit complexes succinate dehydrogenase (complex II, CII), ubiquinol-cytochrome c oxidoreductase (cytochrome b-c1 complex, complex III, CIII) and cytochrome c oxidase (complex IV, CIV), that cooperate to transfer electrons derived from NADH and succinate to molecular oxygen, creating an electrochemical gradient over the inner membrane that drives transmembrane transport and the ATP synthase. Cytochrome c oxidase is the component of the respiratory chain that catalyzes the reduction of oxygen to water. Electrons originating from reduced cytochrome c in the intermembrane space (IMS) are transferred via the dinuclear copper A center (CU(A)) of subunit 2 and heme A of subunit 1 to the active site in subunit 1, a binuclear center (BNC) formed by heme A3 and copper B (CU(B)). The BNC reduces molecular oxygen to 2 water molecules using 4 electrons from cytochrome c in the IMS and 4 protons from the mitochondrial matrix. This is Cytochrome c oxidase subunit 1 (COXI) from Saccharomyces paradoxus (Yeast).